Reading from the N-terminus, the 188-residue chain is Probable manganese efflux pump MntP (188 aa).

The next 5 membrane-spanning stretches (helical) occupy residues 3–23, 66–86, 106–128, 143–163, and 168–188; these read ITAT…ASVG, LEWN…RMII, WLLV…GLAF, ATLI…SIIG, and ILGG…HFHG.

It belongs to the MntP (TC 9.B.29) family.

The protein resides in the cell inner membrane. Functionally, probably functions as a manganese efflux pump. The chain is Probable manganese efflux pump MntP from Shigella sonnei (strain Ss046).